Here is a 250-residue protein sequence, read N- to C-terminus: Adapter protein MecA (250 aa).

Belongs to the MecA family. As to quaternary structure, homodimer.

Enables the recognition and targeting of unfolded and aggregated proteins to the ClpC protease or to other proteins involved in proteolysis. This chain is Adapter protein MecA, found in Streptococcus sanguinis (strain SK36).